The following is a 437-amino-acid chain: Transcription factor AP-2-alpha (437 aa).

A Glycyl lysine isopeptide (Lys-Gly) (interchain with G-Cter in SUMO); alternate cross-link involves residue Lys10. Lys10 participates in a covalent cross-link: Glycyl lysine isopeptide (Lys-Gly) (interchain with G-Cter in SUMO2); alternate. Positions 14-107 are disordered; it reads CEDRHDGASN…GQRQSQESGL (94 aa). A PPxY motif motif is present at residues 57–62; sequence YFPPPY. Composition is skewed to low complexity over residues 65 to 74 and 88 to 101; these read IYPQSQDPYS and QPQPQHPGWPGQRQ. Glycyl lysine isopeptide (Lys-Gly) (interchain with G-Cter in SUMO2) cross-links involve residues Lys177 and Lys184. Residue Ser239 is modified to Phosphoserine; by PKA. The interval 280-410 is H-S-H (helix-span-helix), dimerization; the sequence is RRKAANVTLL…YLTEALKAMD (131 aa). The segment covering 414–427 has biased composition (polar residues); sequence LSNNPNSHTDNNAK. The disordered stretch occupies residues 414–437; the sequence is LSNNPNSHTDNNAKSSDKEEKHRK. The span at 428–437 shows a compositional bias: basic and acidic residues; it reads SSDKEEKHRK.

The protein belongs to the AP-2 family. As to quaternary structure, binds DNA as a dimer. Can form homodimers or heterodimers with other AP-2 family members. Interacts with WWOX. Interacts with CITED4. Interacts with UBE2I. Interacts with RALBP1 in a complex also containing EPN1 and NUMB during interphase and mitosis. Interacts with KCTD1; this interaction represses transcription activation. Interacts (via C-terminus) with CITED2 (via C-terminus); the interaction stimulates TFAP2A-transcriptional activation. Interacts (via N-terminus) with EP300 (via N-terminus); the interaction requires CITED2. Interacts with KCTD15; this interaction inhibits TFAP2A transcriptional activation. Sumoylated on Lys-10; which inhibits transcriptional activity.

It is found in the nucleus. Sequence-specific DNA-binding protein that interacts with inducible viral and cellular enhancer elements to regulate transcription of selected genes. AP-2 factors bind to the consensus sequence 5'-GCCNNNGGC-3' and activate genes involved in a large spectrum of important biological functions including proper eye, face, body wall, limb and neural tube development. They also suppress a number of genes including MCAM/MUC18, C/EBP alpha and MYC. AP-2-alpha is the only AP-2 protein required for early morphogenesis of the lens vesicle. Together with the CITED2 coactivator, stimulates the PITX2 P1 promoter transcription activation. Associates with chromatin to the PITX2 P1 promoter region. In Bos taurus (Bovine), this protein is Transcription factor AP-2-alpha (TFAP2A).